Consider the following 359-residue polypeptide: MPDRTPDEVLRQTLAILAPGTDLRDGLERILRGRTGALIVLGFDRVVDSLSTGGFALDVEFSATRLRELAKMDGAIVLDRDVSRIVRAAVQLVPDSSIETSESGTRHRTAERVAKQTGFPVISVSQSMRIVAVYTGNRRYVLEGSDAILGRANQALQTLERYRARLDEVTGTLSALEIEDLVTVRDVCSVVQRIEMVSRIADEISGYVVELGVDGRLLSLQLDELVGGVGPDRELVVRDYLEASRYEGPLEAVLESLAGLHQSDLVDLSQVARVLGFSVGGDSLDSAVSPKGFRLLNRVPRLPGAIVERLVDQFGDLQKLLAASIDDLMTVDGVGEQRARAVREGLSRLAESSILERYV.

In terms of domain architecture, DAC spans 7–146 (DEVLRQTLAI…NRRYVLEGSD (140 aa)). ATP contacts are provided by residues Gly74, Leu92, and 105–109 (TRHRT).

Belongs to the DisA family. Homooctamer. Mg(2+) is required as a cofactor.

It catalyses the reaction 2 ATP = 3',3'-c-di-AMP + 2 diphosphate. Participates in a DNA-damage check-point. DisA forms globular foci that rapidly scan along the chromosomes searching for lesions. In terms of biological role, also has diadenylate cyclase activity, catalyzing the condensation of 2 ATP molecules into cyclic di-AMP (c-di-AMP). c-di-AMP likely acts as a signaling molecule that may couple DNA integrity with a cellular process. This is DNA integrity scanning protein DisA from Kineococcus radiotolerans (strain ATCC BAA-149 / DSM 14245 / SRS30216).